The following is a 288-amino-acid chain: Lipoyl synthase (288 aa).

[4Fe-4S] cluster-binding residues include Cys39, Cys44, Cys50, Cys65, Cys69, Cys72, and Ser276. The Radical SAM core domain maps to 51–265 (WGKGTATFMI…KETGLKKGFE (215 aa)).

It belongs to the radical SAM superfamily. Lipoyl synthase family. [4Fe-4S] cluster is required as a cofactor.

The protein resides in the cytoplasm. It carries out the reaction [[Fe-S] cluster scaffold protein carrying a second [4Fe-4S](2+) cluster] + N(6)-octanoyl-L-lysyl-[protein] + 2 oxidized [2Fe-2S]-[ferredoxin] + 2 S-adenosyl-L-methionine + 4 H(+) = [[Fe-S] cluster scaffold protein] + N(6)-[(R)-dihydrolipoyl]-L-lysyl-[protein] + 4 Fe(3+) + 2 hydrogen sulfide + 2 5'-deoxyadenosine + 2 L-methionine + 2 reduced [2Fe-2S]-[ferredoxin]. Its pathway is protein modification; protein lipoylation via endogenous pathway; protein N(6)-(lipoyl)lysine from octanoyl-[acyl-carrier-protein]: step 2/2. In terms of biological role, catalyzes the radical-mediated insertion of two sulfur atoms into the C-6 and C-8 positions of the octanoyl moiety bound to the lipoyl domains of lipoate-dependent enzymes, thereby converting the octanoylated domains into lipoylated derivatives. This is Lipoyl synthase from Bacteroides fragilis (strain YCH46).